We begin with the raw amino-acid sequence, 577 residues long: Arginine--tRNA ligase (577 aa).

A 'HIGH' region motif is present at residues proline 122–histidine 132.

This sequence belongs to the class-I aminoacyl-tRNA synthetase family. Monomer.

It is found in the cytoplasm. It carries out the reaction tRNA(Arg) + L-arginine + ATP = L-arginyl-tRNA(Arg) + AMP + diphosphate. This is Arginine--tRNA ligase from Edwardsiella ictaluri (strain 93-146).